The primary structure comprises 400 residues: MDEGGGGEGGSVPEDLSLEEREELLDIRRRKKELIDDIERLKYEIAEVMTEIDNLTSVEESKTTQRNKQIAMGRKKFNMDPKKGIQFLIENDLLQSSPEDVAQFLYKGEGLNKTVIGDYLGERDDFNIKVLQAFVELHEFADLNLVQALRQFLWSFRLPGEAQKIDRMMEAFASRYCLCNPGVFQSTDTCYVLSFAIIMLNTSLHNHNVRDKPTAERFITMNRGINEGGDLPEELLRNLYESIKNEPFKIPEDDGNDLTHTFFNPDREGWLLKLGGGRVKTWKRRWFILTDNCLYYFEYTTDKEPRGIIPLENLSIREVEDPRKPNCFELYNPSHKGQVIKACKTEADGRVVEGNHVVYRISAPSPEEKEEWMKSIKASISRDPFYDMLATRKRRIANKK.

Residues 14–61 (EDLSLEEREELLDIRRRKKELIDDIERLKYEIAEVMTEIDNLTSVEES) are a coiled coil. The SEC7 domain maps to 77–206 (FNMDPKKGIQ…IIMLNTSLHN (130 aa)). One can recognise a PH domain in the interval 265 to 381 (PDREGWLLKL…WMKSIKASIS (117 aa)). Residues 273–281 (KLGGGRVKT), R285, Y296, R306, and N355 each bind a 1,2-diacyl-sn-glycero-3-phospho-(1D-myo-inositol-3,4,5-trisphosphate). A C-terminal autoinhibitory region region spans residues 392–400 (RKRRIANKK).

As to quaternary structure, interacts with TAMALIN. As to expression, present in all tissues tested, with highest protein levels in brain and adrenal.

It localises to the cytoplasm. It is found in the cytosol. The protein resides in the cell membrane. In terms of biological role, promotes guanine-nucleotide exchange on ARF1. Promotes the activation of ARF factors through replacement of GDP with GTP. The sequence is that of Cytohesin-3 (Cyth3) from Rattus norvegicus (Rat).